Reading from the N-terminus, the 180-residue chain is ATP-dependent protease subunit HslV (180 aa).

The active site involves threonine 7. Na(+)-binding residues include glycine 163, cysteine 166, and threonine 169.

It belongs to the peptidase T1B family. HslV subfamily. As to quaternary structure, a double ring-shaped homohexamer of HslV is capped on each side by a ring-shaped HslU homohexamer. The assembly of the HslU/HslV complex is dependent on binding of ATP.

Its subcellular location is the cytoplasm. It carries out the reaction ATP-dependent cleavage of peptide bonds with broad specificity.. Allosterically activated by HslU binding. Its function is as follows. Protease subunit of a proteasome-like degradation complex believed to be a general protein degrading machinery. This chain is ATP-dependent protease subunit HslV, found in Alcanivorax borkumensis (strain ATCC 700651 / DSM 11573 / NCIMB 13689 / SK2).